The following is a 360-amino-acid chain: Peptide chain release factor 1 (360 aa).

Q235 bears the N5-methylglutamine mark.

The protein belongs to the prokaryotic/mitochondrial release factor family. Post-translationally, methylated by PrmC. Methylation increases the termination efficiency of RF1.

Its subcellular location is the cytoplasm. Peptide chain release factor 1 directs the termination of translation in response to the peptide chain termination codons UAG and UAA. The protein is Peptide chain release factor 1 of Delftia acidovorans (strain DSM 14801 / SPH-1).